The chain runs to 303 residues: MYYGFDIGGTKIALGVFDSTRRLQWEKRVPTPHTSYSAFLDAVCELVAEADQRFGVKGSVGIGIPGMPETEDGTLYAANVPAASGKPLRADLSARLDRDVRLDNDANCFALSEAWDDEFTQYPLVMGLILGTGVGGGLVLNGKPITGQSYITGEFGHMRLPVDALTLMGFDFPLRRCGCGQMGCIENYLSGRGFAWLYQHYYDQSLQAPEIIALWEQGDEQAHAHVERYLDLLAVCLGNILTIVDPDLLVIGGGLSNFTAITTQLAERLPRHLLPVARAPRIERARHGDAGGMRGAAFLHLTD.

Residues Gly-4 to Lys-11 and Gly-133 to Leu-140 contribute to the ATP site. Zn(2+) is bound by residues His-157, Cys-177, Cys-179, and Cys-184.

Belongs to the ROK (NagC/XylR) family. NagK subfamily.

The catalysed reaction is N-acetyl-D-glucosamine + ATP = N-acetyl-D-glucosamine 6-phosphate + ADP + H(+). It functions in the pathway cell wall biogenesis; peptidoglycan recycling. Its function is as follows. Catalyzes the phosphorylation of N-acetyl-D-glucosamine (GlcNAc) derived from cell-wall degradation, yielding GlcNAc-6-P. The protein is N-acetyl-D-glucosamine kinase of Salmonella agona (strain SL483).